Here is a 78-residue protein sequence, read N- to C-terminus: MSQNNTISSMNPERAYNNVTLKNLTAFQLLSQRENICELLNLVESTERHNSIINPERQRMSLEEMKKMLDALKNERKK.

N-acetylserine is present on Ser-2.

In terms of assembly, interacts directly with RSC8. Component of the two forms of the RSC complex composed of at least either RSC1 or RSC2, and ARP7, ARP9, LDB7, NPL6, RSC3, RSC30, RSC4, RSC58, RSC6, RSC8, RSC9, SFH1, STH1, HTL1 and probably RTT102. The complexes interact with histone and histone variant components of centromeric chromatin. Component of a fungal-specific module (HTL1-LDB7-NPL6-RSC3-RSC30) within the RSC complex.

The protein resides in the nucleus. Its function is as follows. Required for cell cycle progression through G2/M transition at temperatures higher than 33 degrees Celsius. Component of the chromatin structure-remodeling complex (RSC), which is involved in transcription regulation and nucleosome positioning. RSC is responsible for the transfer of a histone octamer from a nucleosome core particle to naked DNA. The reaction requires ATP and involves an activated RSC-nucleosome intermediate. Remodeling reaction also involves DNA translocation, DNA twist and conformational change. As a reconfigurer of centromeric and flanking nucleosomes, RSC complex is required both for proper kinetochore function in chromosome segregation and, via a PKC1-dependent signaling pathway, for organization of the cellular cytoskeleton. When associated with the RSC complex, may act coordinately with PKC1 to regulate G2/M transition. Together with LDB7, NPL6, RSC3, RSC30 components, defines a fungal-specific module within the RSC complex that plays a role in many cellular functions including the maintenance of cell wall integrity. This Saccharomyces cerevisiae (strain ATCC 204508 / S288c) (Baker's yeast) protein is High temperature lethal protein 1 (HTL1).